The following is a 554-amino-acid chain: Probable urocanate hydratase (554 aa).

NAD(+) is bound by residues 49 to 50, Q127, E194, 240 to 241, 261 to 265, 271 to 272, and Y320; these read GG, NA, QTAAH, and YI. The active site involves C408. Residue G490 coordinates NAD(+).

This sequence belongs to the urocanase family. The cofactor is NAD(+).

Its subcellular location is the cytoplasm. The catalysed reaction is 4-imidazolone-5-propanoate = trans-urocanate + H2O. It functions in the pathway amino-acid degradation; L-histidine degradation into L-glutamate; N-formimidoyl-L-glutamate from L-histidine: step 2/3. In terms of biological role, catalyzes the conversion of urocanate to 4-imidazolone-5-propionate. The protein is Probable urocanate hydratase of Thermoplasma acidophilum (strain ATCC 25905 / DSM 1728 / JCM 9062 / NBRC 15155 / AMRC-C165).